The chain runs to 326 residues: AA10 family lytic polysaccharide monooxygenase C (326 aa).

Positions 1 to 32 are cleaved as a signal peptide; sequence MVFSNSNASVSLFRLVALVATLSHLVFTFVDA. 2 residues coordinate Cu(2+): His33 and His118. Residues 33-200 enclose the Chitin-binding type-4 domain; sequence HGYVTFPASR…ANAFYQCLDL (168 aa). A disulfide bridge connects residues Cys81 and Cys197. Residues Asn206, Asn215, Asn266, and Asn303 are each glycosylated (N-linked (GlcNAc...) asparagine). The disordered stretch occupies residues 206–326; that stretch reads NSSSSSSSSN…KSQMRRDRQG (121 aa). Over residues 207–281 the composition is skewed to low complexity; the sequence is SSSSSSSSNS…NNGGSSGSTT (75 aa).

It belongs to the polysaccharide monooxygenase AA10 family. Cu(2+) is required as a cofactor.

The protein resides in the secreted. Its function is as follows. Lytic polysaccharide monooxygenase (LPMO) that oxidatively cleaves alpha- and beta-chitin with C1 regioselectivity. Catalysis by LPMOs requires the reduction of the active-site copper from Cu(II) to Cu(I) by a reducing agent and H(2)O(2) or O(2) as a cosubstrate. Exhibits enzymatic activity on U.maydis fungal cell wall chitin and Boosts chitin hydrolysis by chitinase GH18A. The sequence is that of AA10 family lytic polysaccharide monooxygenase C from Mycosarcoma maydis (Corn smut fungus).